Consider the following 197-residue polypeptide: dTTP/UTP pyrophosphatase (197 aa).

The Proton acceptor role is filled by Asp70.

The protein belongs to the Maf family. YhdE subfamily. Requires a divalent metal cation as cofactor.

It is found in the cytoplasm. The catalysed reaction is dTTP + H2O = dTMP + diphosphate + H(+). It carries out the reaction UTP + H2O = UMP + diphosphate + H(+). Its function is as follows. Nucleoside triphosphate pyrophosphatase that hydrolyzes dTTP and UTP. May have a dual role in cell division arrest and in preventing the incorporation of modified nucleotides into cellular nucleic acids. In Shigella sonnei (strain Ss046), this protein is dTTP/UTP pyrophosphatase (yceF2).